The primary structure comprises 516 residues: AMP phosphorylase (516 aa).

AMP contacts are provided by residues glycine 169, 195 to 200 (SRAITG), and threonine 204. Aspartate 257 acts as the Proton donor in catalysis. Serine 265 and lysine 289 together coordinate AMP.

Belongs to the thymidine/pyrimidine-nucleoside phosphorylase family. Type 2 subfamily.

The catalysed reaction is AMP + phosphate = alpha-D-ribose 1,5-bisphosphate + adenine. The enzyme catalyses CMP + phosphate = cytosine + alpha-D-ribose 1,5-bisphosphate. It carries out the reaction UMP + phosphate = alpha-D-ribose 1,5-bisphosphate + uracil. In terms of biological role, catalyzes the conversion of AMP and phosphate to adenine and ribose 1,5-bisphosphate (R15P). Exhibits phosphorylase activity toward CMP and UMP in addition to AMP. Functions in an archaeal AMP degradation pathway, together with R15P isomerase and RubisCO. This Methanospirillum hungatei JF-1 (strain ATCC 27890 / DSM 864 / NBRC 100397 / JF-1) protein is AMP phosphorylase.